The chain runs to 292 residues: UPF0696 protein C11orf68 homolog (292 aa).

Residues 1-10 (MAAAAAAVAG) show a composition bias toward low complexity. The disordered stretch occupies residues 1-60 (MAAAAAAVAGAGRGGGGGAEPRQERSRARGWAGAERSEGRRMEPGEELEEEDSPGGREDG). A compositionally biased stretch (basic and acidic residues) spans 35–44 (ERSEGRRMEP).

Belongs to the UPF0696 family.

The chain is UPF0696 protein C11orf68 homolog from Bos taurus (Bovine).